A 168-amino-acid polypeptide reads, in one-letter code: MSVANSRTAVYPGTFDPITNGHIDLVNRAAPLFERVVVGVAYSPSKGPALSLERRVALAQEALAAHANVEVRGFDTLLAHFVRQMGAGVLLRGLRAVSDFEYEFQMASMNRHLIPEVETLFLTPSEQYSFISSSLVREIARLGGDVSGFVPASVVEALRQVRESRAQA.

Residue T14 participates in substrate binding. Residues 14–15 (TF) and H22 contribute to the ATP site. Substrate is bound by residues K46, L78, and R92. ATP-binding positions include 93–95 (GLR), E103, and 128–134 (YSFISSS).

Belongs to the bacterial CoaD family. As to quaternary structure, homohexamer. Mg(2+) serves as cofactor.

The protein resides in the cytoplasm. It carries out the reaction (R)-4'-phosphopantetheine + ATP + H(+) = 3'-dephospho-CoA + diphosphate. It functions in the pathway cofactor biosynthesis; coenzyme A biosynthesis; CoA from (R)-pantothenate: step 4/5. In terms of biological role, reversibly transfers an adenylyl group from ATP to 4'-phosphopantetheine, yielding dephospho-CoA (dPCoA) and pyrophosphate. This Xanthomonas oryzae pv. oryzae (strain MAFF 311018) protein is Phosphopantetheine adenylyltransferase.